The primary structure comprises 378 residues: Putative protein YbfL (378 aa).

It belongs to the transposase 11 family.

The chain is Putative protein YbfL (ybfL) from Escherichia coli (strain K12).